Reading from the N-terminus, the 641-residue chain is Threonine--tRNA ligase (641 aa).

The TGS domain occupies 1–61 (MPVITLPDGS…ENDTELAIVT (61 aa)). Positions 242-533 (DHRKIGKKLG…LIEEYEGAFP (292 aa)) are catalytic. The Zn(2+) site is built by Cys-333, His-384, and His-510.

Belongs to the class-II aminoacyl-tRNA synthetase family. Homodimer. Requires Zn(2+) as cofactor.

The protein localises to the cytoplasm. The enzyme catalyses tRNA(Thr) + L-threonine + ATP = L-threonyl-tRNA(Thr) + AMP + diphosphate + H(+). In terms of biological role, catalyzes the attachment of threonine to tRNA(Thr) in a two-step reaction: L-threonine is first activated by ATP to form Thr-AMP and then transferred to the acceptor end of tRNA(Thr). Also edits incorrectly charged L-seryl-tRNA(Thr). The protein is Threonine--tRNA ligase of Marinobacter nauticus (strain ATCC 700491 / DSM 11845 / VT8) (Marinobacter aquaeolei).